The following is a 92-amino-acid chain: Small ribosomal subunit protein uS19c (92 aa).

Belongs to the universal ribosomal protein uS19 family.

It localises to the plastid. The protein localises to the chloroplast. Functionally, protein S19 forms a complex with S13 that binds strongly to the 16S ribosomal RNA. The protein is Small ribosomal subunit protein uS19c of Cicer arietinum (Chickpea).